Here is a 431-residue protein sequence, read N- to C-terminus: Aspartate--tRNA(Asp/Asn) ligase (431 aa).

L-aspartate is bound at residue E170. An aspartate region spans residues 192–195 (QLYK). L-aspartate is bound at residue R214. ATP is bound by residues 214-216 (RAE), 222-224 (RHL), and E354. E354 and S357 together coordinate Mg(2+). S357 and R361 together coordinate L-aspartate. 402 to 405 (GLER) is an ATP binding site.

The protein belongs to the class-II aminoacyl-tRNA synthetase family. Type 2 subfamily. As to quaternary structure, homodimer. It depends on Mg(2+) as a cofactor.

Its subcellular location is the cytoplasm. The catalysed reaction is tRNA(Asx) + L-aspartate + ATP = L-aspartyl-tRNA(Asx) + AMP + diphosphate. Aspartyl-tRNA synthetase with relaxed tRNA specificity since it is able to aspartylate not only its cognate tRNA(Asp) but also tRNA(Asn). Reaction proceeds in two steps: L-aspartate is first activated by ATP to form Asp-AMP and then transferred to the acceptor end of tRNA(Asp/Asn). The chain is Aspartate--tRNA(Asp/Asn) ligase from Methanopyrus kandleri (strain AV19 / DSM 6324 / JCM 9639 / NBRC 100938).